The sequence spans 282 residues: MKLVQTIKELQSELDALRSEGKTIGLVPTMGALHAGHASLVKRAVAENDVVVVSDFVNPTQFNDKNDLAKYPRTLDADCELLEKVGAAFVFAPSVEEIYPEPDTRQFSYAPLDTVMEGRFRPGHFNGVCQIVSKLFMIVNPTRAYFGEKDFQQLAIIREMVKQIGFNGLEIVGCPIVREEDGLALSSRNARLSAVEREYALNISQTLFKSCTFAKSHPVAETQKFVEDAIAAAPGLRLEYFEIVDGTTLQKITDWEDTDYAVGCITVFCGEVRLIDNIKYKG.

30–37 lines the ATP pocket; it reads MGALHAGH. The active-site Proton donor is histidine 37. Glutamine 61 lines the (R)-pantoate pocket. A beta-alanine-binding site is contributed by glutamine 61. Position 147–150 (147–150) interacts with ATP; it reads GEKD. Residue glutamine 153 participates in (R)-pantoate binding. ATP-binding positions include valine 177 and 185 to 188; that span reads LSSR.

It belongs to the pantothenate synthetase family. In terms of assembly, homodimer.

The protein localises to the cytoplasm. It carries out the reaction (R)-pantoate + beta-alanine + ATP = (R)-pantothenate + AMP + diphosphate + H(+). It participates in cofactor biosynthesis; (R)-pantothenate biosynthesis; (R)-pantothenate from (R)-pantoate and beta-alanine: step 1/1. Catalyzes the condensation of pantoate with beta-alanine in an ATP-dependent reaction via a pantoyl-adenylate intermediate. In Phocaeicola vulgatus (strain ATCC 8482 / DSM 1447 / JCM 5826 / CCUG 4940 / NBRC 14291 / NCTC 11154) (Bacteroides vulgatus), this protein is Pantothenate synthetase.